The primary structure comprises 267 residues: Rhomboid-type serine protease 2 (267 aa).

6 consecutive transmembrane segments (helical) span residues 20 to 40, 67 to 87, 99 to 119, 126 to 146, 155 to 179, and 185 to 206; these read LPLFTRLIVLAIIALSIASLQ, FPLIHLNVIHAILNLLALTPL, TSLALFFGPLTSIPAVAYVLI, ANHGVLGASMWVFTLLAMESI, FVIGSVNIPTWTTPLIMSLVVAALI, and LGHLCGIAIGYVAGFGYAKLLA. Serine 134 acts as the Nucleophile in catalysis. The active site involves histidine 187. The interval 247 to 267 is disordered; the sequence is RPGPSGSAATELVGTTQRLGP.

It belongs to the peptidase S54 family.

The protein localises to the golgi apparatus membrane. Its subcellular location is the golgi apparatus. It localises to the cis-Golgi network membrane. The enzyme catalyses Cleaves type-1 transmembrane domains using a catalytic dyad composed of serine and histidine that are contributed by different transmembrane domains.. Probable rhomboid-type serine protease that catalyzes intramembrane proteolysis. The sequence is that of Rhomboid-type serine protease 2 (RBD2) from Gibberella zeae (strain ATCC MYA-4620 / CBS 123657 / FGSC 9075 / NRRL 31084 / PH-1) (Wheat head blight fungus).